The following is a 728-amino-acid chain: 1,4-alpha-glucan branching enzyme GlgB (728 aa).

The active-site Nucleophile is the aspartate 405. Glutamate 458 (proton donor) is an active-site residue.

This sequence belongs to the glycosyl hydrolase 13 family. GlgB subfamily. In terms of assembly, monomer.

It carries out the reaction Transfers a segment of a (1-&gt;4)-alpha-D-glucan chain to a primary hydroxy group in a similar glucan chain.. It participates in glycan biosynthesis; glycogen biosynthesis. In terms of biological role, catalyzes the formation of the alpha-1,6-glucosidic linkages in glycogen by scission of a 1,4-alpha-linked oligosaccharide from growing alpha-1,4-glucan chains and the subsequent attachment of the oligosaccharide to the alpha-1,6 position. In Escherichia coli O6:K15:H31 (strain 536 / UPEC), this protein is 1,4-alpha-glucan branching enzyme GlgB.